A 183-amino-acid chain; its full sequence is Ribosome-recycling factor (183 aa).

Belongs to the RRF family.

Its subcellular location is the cytoplasm. Functionally, responsible for the release of ribosomes from messenger RNA at the termination of protein biosynthesis. May increase the efficiency of translation by recycling ribosomes from one round of translation to another. The sequence is that of Ribosome-recycling factor from Deinococcus radiodurans (strain ATCC 13939 / DSM 20539 / JCM 16871 / CCUG 27074 / LMG 4051 / NBRC 15346 / NCIMB 9279 / VKM B-1422 / R1).